A 358-amino-acid polypeptide reads, in one-letter code: MIIKDIVIGHLSVPLKKPFKTAVRSVNSVNDVVVKIITDTGNVGFGSAASTGLVTGDITESIEGAINNYIKRSIVGMDIEDFEAILIKLDNCIVGNTSAKAAVDIALYDLYGQRYGAPLYKLLGGFRNKLETDITISVNSPEEMSRDSVDAVKLGYKTLKIKVGKNPKLDIKRMREIRKAIGYEVNLRIDANQGWQPKEAIRALNEIENEGLKIELVEQPVKAWNLEGLKMVTDNVNIPVMADESVFSPKDAARVMEMRACDLINIKLMKTGGIHNALKICALAEVYGMECMLGCMLEGKVSVTAAVHLAAAKRIITKIDLDGPVLCSRDDVVGGAMYDNSNIVLVDEPGLGIEGINN.

The substrate site is built by Arg-24, Thr-135, and Lys-160. The active-site Proton acceptor; specific for (R)-substrate epimerization is the Lys-162. Residues Asp-190, Glu-218, and Asp-243 each coordinate Mg(2+). Lys-267 (proton acceptor; specific for (S)-substrate epimerization) is an active-site residue. Residues Cys-295, Asp-320, and Asp-322 each contribute to the substrate site.

The protein belongs to the mandelate racemase/muconate lactonizing enzyme family. Mg(2+) is required as a cofactor.

It catalyses the reaction L-alanyl-L-glutamate = L-alanyl-D-glutamate. The protein operates within cell wall degradation; peptidoglycan degradation. In terms of biological role, catalyzes the epimerization of L-Ala-D-Glu to L-Ala-L-Glu and has probably a role in the metabolism of the murein peptide, of which L-Ala-D-Glu is a component. Is also able to catalyze the epimerization of L-Ala-D-Asp. The protein is L-Ala-D/L-Glu epimerase of Clostridium acetobutylicum (strain ATCC 824 / DSM 792 / JCM 1419 / IAM 19013 / LMG 5710 / NBRC 13948 / NRRL B-527 / VKM B-1787 / 2291 / W).